Consider the following 435-residue polypeptide: Amino acid transporter AVT6C (435 aa).

The tract at residues 1-24 (MTPQIKTHLLPKQEPSSSENHGSS) is disordered. Transmembrane regions (helical) follow at residues 28-48 (IVFN…PAAF), 53-73 (IVPA…SVGF), 100-120 (IAVQ…FSII), 148-168 (WNTR…PLVL), 181-201 (VSFL…ISAL), 219-239 (GSFW…TFHF), 260-280 (ISVI…YLLF), 307-327 (IVRL…NFSL), 354-374 (LALL…WYFF), 375-395 (QFMG…AIVL), and 408-428 (IVAA…ISTN).

Belongs to the amino acid/polyamine transporter 2 family. Amino acid/auxin permease (AAAP) (TC 2.A.18.6) subfamily.

Its subcellular location is the membrane. This chain is Amino acid transporter AVT6C, found in Arabidopsis thaliana (Mouse-ear cress).